Consider the following 488-residue polypeptide: Ribulose bisphosphate carboxylase large chain (488 aa).

The substrate site is built by Asn127 and Thr177. The Proton acceptor role is filled by Lys179. Lys181 is a binding site for substrate. The Mg(2+) site is built by Lys205, Asp207, and Glu208. At Lys205 the chain carries N6-carboxylysine. The Proton acceptor role is filled by His297. Substrate contacts are provided by Arg298, His330, and Ser382.

The protein belongs to the RuBisCO large chain family. Type I subfamily. As to quaternary structure, heterohexadecamer of 8 large chains and 8 small chains. Mg(2+) serves as cofactor.

It is found in the plastid. The protein resides in the chloroplast. The catalysed reaction is 2 (2R)-3-phosphoglycerate + 2 H(+) = D-ribulose 1,5-bisphosphate + CO2 + H2O. It carries out the reaction D-ribulose 1,5-bisphosphate + O2 = 2-phosphoglycolate + (2R)-3-phosphoglycerate + 2 H(+). In terms of biological role, ruBisCO catalyzes two reactions: the carboxylation of D-ribulose 1,5-bisphosphate, the primary event in carbon dioxide fixation, as well as the oxidative fragmentation of the pentose substrate in the photorespiration process. Both reactions occur simultaneously and in competition at the same active site. In Rhodomonas salina (Cryptomonas salina), this protein is Ribulose bisphosphate carboxylase large chain.